The primary structure comprises 441 residues: D-inositol 3-phosphate glycosyltransferase (441 aa).

Residue H38 participates in 1D-myo-inositol 3-phosphate binding. UDP-N-acetyl-alpha-D-glucosamine is bound by residues 44-45 (QP) and G52. 1D-myo-inositol 3-phosphate contacts are provided by residues 49 to 54 (DAGGMN), K107, Y140, T164, and R184. 3 residues coordinate UDP-N-acetyl-alpha-D-glucosamine: R258, K263, and Q316. 3 residues coordinate Mg(2+): F325, Q326, and A328. UDP-N-acetyl-alpha-D-glucosamine is bound by residues E338 and E346. Residue T352 participates in Mg(2+) binding.

The protein belongs to the glycosyltransferase group 1 family. MshA subfamily. Homodimer.

The catalysed reaction is 1D-myo-inositol 3-phosphate + UDP-N-acetyl-alpha-D-glucosamine = 1D-myo-inositol 2-acetamido-2-deoxy-alpha-D-glucopyranoside 3-phosphate + UDP + H(+). Functionally, catalyzes the transfer of a N-acetyl-glucosamine moiety to 1D-myo-inositol 3-phosphate to produce 1D-myo-inositol 2-acetamido-2-deoxy-glucopyranoside 3-phosphate in the mycothiol biosynthesis pathway. This Mycolicibacterium paratuberculosis (strain ATCC BAA-968 / K-10) (Mycobacterium paratuberculosis) protein is D-inositol 3-phosphate glycosyltransferase.